The primary structure comprises 661 residues: Phospholipid:diacylglycerol acyltransferase (661 aa).

The disordered stretch occupies residues 1-71 (MGTLFRRNVQ…FDRKRDGNGR (71 aa)). Topologically, residues 1–80 (MGTLFRRNVQ…RKRWRDSRRL (80 aa)) are cytoplasmic. Positions 34-48 (HIHHQQGLGHKRRRG) are enriched in basic residues. Short sequence motifs (bipartite nuclear localization signal) lie at residues 43–50 (HKRRRGIS) and 64–71 (RKRDGNGR). Residues 54–70 (KRNERGKDFDRKRDGNG) are compositionally biased toward basic and acidic residues. A helical transmembrane segment spans residues 81–101 (IFILGAFLGVLLPFSFGAYHV). Topologically, residues 102-661 (HNSDSDLFDN…QWVSQMPFPM (560 aa)) are lumenal. Position 162 (Gln162) interacts with substrate. A GHSXG lipase motif motif is present at residues 322–326 (GHSMG). Ser324 acts as the Acyl-ester intermediate in catalysis. Substrate is bound at residue Met325. Residues Asn453, Asn461, and Asn469 are each glycosylated (N-linked (GlcNAc...) asparagine). The active-site Charge relay system is Asp567. Asn594 carries an N-linked (GlcNAc...) asparagine glycan. His618 functions as the Charge relay system in the catalytic mechanism.

Belongs to the AB hydrolase superfamily. Lipase family.

Its subcellular location is the endoplasmic reticulum membrane. The protein resides in the nucleus inner membrane. The enzyme catalyses a glycerophospholipid + a 1,2-diacyl-sn-glycerol = a monoacylglycerophospholipid + a triacyl-sn-glycerol. It carries out the reaction a 1-acyl-sn-glycerol + a 1,2-diacyl-sn-glycero-3-phosphocholine = a 1-acyl-sn-glycero-3-phosphocholine + a 1,2-diacyl-sn-glycerol. The catalysed reaction is 1,2-di-(9Z-octadecenoyl)-sn-glycero-3-phosphoethanolamine + 1,2-di-(9Z-octadecenoyl)-sn-glycerol = 1-(9Z-octadecenoyl)-sn-glycero-3-phosphoethanolamine + 1,2,3-tri-(9Z-octadecenoyl)-glycerol. It catalyses the reaction 1,2-di-(9Z-octadecenoyl)-sn-glycerol + 1,2-di-(9Z-octadecenoyl)-sn-glycero-3-phosphocholine = 1,2,3-tri-(9Z-octadecenoyl)-glycerol + 1-(9Z-octadecenoyl)-sn-glycero-3-phosphocholine. The enzyme catalyses 1-(9Z-octadecenoyl)-sn-glycerol + 1,2-di-(9Z-octadecenoyl)-sn-glycero-3-phosphocholine = di-(9Z)-octadecenoylglycerol + 1-(9Z-octadecenoyl)-sn-glycero-3-phosphocholine. It carries out the reaction 2-(9Z-octadecenoyl)-glycerol + 1,2-di-(9Z-octadecenoyl)-sn-glycero-3-phosphocholine = 1,2-di-(9Z-octadecenoyl)-glycerol + 1-(9Z-octadecenoyl)-sn-glycero-3-phosphocholine. The catalysed reaction is 1-(9Z-octadecenoyl)-2-hexadecanoyl-sn-glycero-3-phosphoethanolamine + 1,2-di-(9Z-octadecenoyl)-sn-glycerol = 1,2-di-(9Z)-octadecenoyl-3-hexadecanoyl-sn-glycerol + 1-(9Z-octadecenoyl)-sn-glycero-3-phosphoethanolamine. It catalyses the reaction 1-(9Z-octadecenoyl)-2-octadecanoyl-sn-glycero-3-phosphoethanolamine + 1,2-di-(9Z-octadecenoyl)-sn-glycerol = 1,2-di-(9Z)-octadecenoyl-3-octadecanoyl-sn-glycerol + 1-(9Z-octadecenoyl)-sn-glycero-3-phosphoethanolamine. The enzyme catalyses 1-(9Z)-octadecenoyl-2-(9Z,12Z)-octadecadienoyl-sn-glycero-3-phosphoethanolamine + 1,2-di-(9Z-octadecenoyl)-sn-glycerol = 1,2-di-(9Z)-octadecenoyl-3-(9Z,12Z)-octadecadienoyl-sn-glycerol + 1-(9Z-octadecenoyl)-sn-glycero-3-phosphoethanolamine. Its function is as follows. Catalyzes triacylglycerol (TAG) formation by an acyl-CoA independent pathway. The enzyme specifically transfers acyl groups from the sn-2 position of a phospholipid to diacylglycerol (DAG), thus forming an sn-1-lysophospholipid. The preferred acyl donors are phosphatidylethanolamine (PE) and phosphatidylcholine (PC). Also capable of using broad acyl donors such as phosphatidic acid (PA), phosphatidylserine (PS), phosphatidylglycerol (PG) and phosphatidylinositol (PI), as well as monogalactosyldiacylglycerol (MGDG), digalactosyldiacylglycerol (DGDG), and acyl-CoA, and it is more likely to use unsaturated acyl donors. As acyl acceptors, it prefers 1,2- over 1,3-diacylglycerol (DAG). Additionally, has esterification activity that can utilize methanol as acyl acceptor to generate fatty acid methyl esters (FAME). Can also utilize ceramide instead of DAG, acylating the ceramides by attaching a fatty acid to the hydroxy group on the first carbon atom of the long-chain base to produce 1-O-acylceramides. Involved in lipid particle synthesis from the endoplasmic reticulum, promoting localized TAG production at discrete ER subdomains. Relocates from the endoplasmic reticulum to a subdomain of the inner nuclear membrane upon nutrient starvation, where it provides a site of TAG synthesis, which is coupled with nuclear membrane remodeling. The chain is Phospholipid:diacylglycerol acyltransferase from Saccharomyces cerevisiae (strain ATCC 204508 / S288c) (Baker's yeast).